A 323-amino-acid chain; its full sequence is o-succinylbenzoate synthase (323 aa).

Lys134 acts as the Proton donor in catalysis. Positions 162, 191, and 214 each coordinate Mg(2+). The active-site Proton acceptor is Lys236.

This sequence belongs to the mandelate racemase/muconate lactonizing enzyme family. MenC type 1 subfamily. A divalent metal cation is required as a cofactor.

The enzyme catalyses (1R,6R)-6-hydroxy-2-succinyl-cyclohexa-2,4-diene-1-carboxylate = 2-succinylbenzoate + H2O. It functions in the pathway quinol/quinone metabolism; 1,4-dihydroxy-2-naphthoate biosynthesis; 1,4-dihydroxy-2-naphthoate from chorismate: step 4/7. The protein operates within quinol/quinone metabolism; menaquinone biosynthesis. Functionally, converts 2-succinyl-6-hydroxy-2,4-cyclohexadiene-1-carboxylate (SHCHC) to 2-succinylbenzoate (OSB). The chain is o-succinylbenzoate synthase from Pectobacterium atrosepticum (strain SCRI 1043 / ATCC BAA-672) (Erwinia carotovora subsp. atroseptica).